We begin with the raw amino-acid sequence, 518 residues long: Protein MGF 505-6R (518 aa).

ANK repeat units follow at residues 54–83 (SIND…NLHY), 129–158 (ECDF…LLNV), 261–290 (SVNR…IPRG), 292–322 (IERL…KVKN), and 324–351 (KKLV…NLVD).

It belongs to the asfivirus MGF 505 family.

Plays a role in virus cell tropism, and may be required for efficient virus replication in macrophages. This Ornithodoros (relapsing fever ticks) protein is Protein MGF 505-6R.